The sequence spans 397 residues: 1-deoxy-D-xylulose 5-phosphate reductoisomerase (397 aa).

Residues T17, G18, S19, I20, N47, and N130 each contribute to the NADPH site. Position 131 (K131) interacts with 1-deoxy-D-xylulose 5-phosphate. NADPH is bound at residue E132. D156 contributes to the Mn(2+) binding site. Residues S157, E158, S182, and H205 each contribute to the 1-deoxy-D-xylulose 5-phosphate site. Mn(2+) is bound at residue E158. Position 211 (G211) interacts with NADPH. S218, N223, K224, and E227 together coordinate 1-deoxy-D-xylulose 5-phosphate. E227 lines the Mn(2+) pocket.

It belongs to the DXR family. It depends on Mg(2+) as a cofactor. The cofactor is Mn(2+).

The catalysed reaction is 2-C-methyl-D-erythritol 4-phosphate + NADP(+) = 1-deoxy-D-xylulose 5-phosphate + NADPH + H(+). It participates in isoprenoid biosynthesis; isopentenyl diphosphate biosynthesis via DXP pathway; isopentenyl diphosphate from 1-deoxy-D-xylulose 5-phosphate: step 1/6. Catalyzes the NADPH-dependent rearrangement and reduction of 1-deoxy-D-xylulose-5-phosphate (DXP) to 2-C-methyl-D-erythritol 4-phosphate (MEP). The polypeptide is 1-deoxy-D-xylulose 5-phosphate reductoisomerase (Rhizobium rhizogenes (strain K84 / ATCC BAA-868) (Agrobacterium radiobacter)).